A 291-amino-acid polypeptide reads, in one-letter code: N-acetylmannosamine kinase (291 aa).

ATP contacts are provided by residues 5–12 and 132–139; these read AIDIGGTK and GVGGGVVS. Zn(2+)-binding residues include His-156, Cys-166, Cys-168, and Cys-173.

The protein belongs to the ROK (NagC/XylR) family. NanK subfamily. As to quaternary structure, homodimer.

The enzyme catalyses an N-acyl-D-mannosamine + ATP = an N-acyl-D-mannosamine 6-phosphate + ADP + H(+). Its pathway is amino-sugar metabolism; N-acetylneuraminate degradation; D-fructose 6-phosphate from N-acetylneuraminate: step 2/5. Its function is as follows. Catalyzes the phosphorylation of N-acetylmannosamine (ManNAc) to ManNAc-6-P. This is N-acetylmannosamine kinase from Escherichia coli (strain K12 / MC4100 / BW2952).